The chain runs to 308 residues: Eukaryotic translation initiation factor 3 subunit G-B (308 aa).

Disordered regions lie at residues 1–35 (MPTGDYDSKPSWADQVEEEGIDVEPLSPQIKKQDP) and 176–227 (STAD…DDNA). A compositionally biased stretch (low complexity) spans 185 to 194 (GAEPEPAQAP). The span at 209 to 227 (GGSRRGESMQPNRRADDNA) shows a compositional bias: basic and acidic residues. In terms of domain architecture, RRM spans 227 to 305 (ATIRVTNLSE…LILNVEWAKP (79 aa)).

Belongs to the eIF-3 subunit G family. In terms of assembly, component of the eukaryotic translation initiation factor 3 (eIF-3) complex, which is composed of 13 subunits: eif3a, eif3b, eif3c, eif3d, eif3e, eif3f, eif3g, eif3h, eif3i, eif3j, eif3k, eif3l and eif3m.

Its subcellular location is the cytoplasm. RNA-binding component of the eukaryotic translation initiation factor 3 (eIF-3) complex, which is involved in protein synthesis of a specialized repertoire of mRNAs and, together with other initiation factors, stimulates binding of mRNA and methionyl-tRNAi to the 40S ribosome. The eIF-3 complex specifically targets and initiates translation of a subset of mRNAs involved in cell proliferation. This subunit can bind 18S rRNA. In Xenopus laevis (African clawed frog), this protein is Eukaryotic translation initiation factor 3 subunit G-B (eif3g-b).